The chain runs to 322 residues: tRNA U34 carboxymethyltransferase (322 aa).

Carboxy-S-adenosyl-L-methionine is bound by residues lysine 91, tryptophan 105, lysine 110, glycine 129, 179–180 (LE), methionine 195, tyrosine 199, and arginine 314.

Belongs to the class I-like SAM-binding methyltransferase superfamily. CmoB family. As to quaternary structure, homotetramer.

It carries out the reaction carboxy-S-adenosyl-L-methionine + 5-hydroxyuridine(34) in tRNA = 5-carboxymethoxyuridine(34) in tRNA + S-adenosyl-L-homocysteine + H(+). Its function is as follows. Catalyzes carboxymethyl transfer from carboxy-S-adenosyl-L-methionine (Cx-SAM) to 5-hydroxyuridine (ho5U) to form 5-carboxymethoxyuridine (cmo5U) at position 34 in tRNAs. This Pseudomonas aeruginosa (strain ATCC 15692 / DSM 22644 / CIP 104116 / JCM 14847 / LMG 12228 / 1C / PRS 101 / PAO1) protein is tRNA U34 carboxymethyltransferase.